The primary structure comprises 417 residues: MAEIKNYTLNFGPQHPAAHGVLRLVLELDGEVIQRADPHIGLLHRATEKLAENKTFIQSVPYMDRLDYVSMMVNEHGYVLAIEKLLGIEVPERAQYIRVLFDEITRVLNHLMWIGAHALDVGAMAVFLYAFREREDLMDVYEAVSGARMHAAYYRPGGVYRDLPEAMPQYKASKIRNERALAKMNEARSGSVLDFIDDFFTRFPKCVDEYETLLTDNRIWKQRLVGIGVVSPERALQLGLTGPMIRGSGIAWDLRKKQPYEVYDRLDFDIPVGVNGDCYDRYLVRVEEMRQSTRIAKQCIEWLRKNPGPVITDNHKVAPPSRVGMKTNMEDLIHHFKLFTEGFHVPEGETYAAVEHPKGEFGIYLVSDGANKPYRLKIRAPGYAHLSALDEMARGHMIADAVTIIGTQDIVFGEIDR.

It belongs to the complex I 49 kDa subunit family. As to quaternary structure, NDH-1 is composed of 14 different subunits. Subunits NuoB, C, D, E, F, and G constitute the peripheral sector of the complex.

Its subcellular location is the cell inner membrane. The catalysed reaction is a quinone + NADH + 5 H(+)(in) = a quinol + NAD(+) + 4 H(+)(out). Its function is as follows. NDH-1 shuttles electrons from NADH, via FMN and iron-sulfur (Fe-S) centers, to quinones in the respiratory chain. The immediate electron acceptor for the enzyme in this species is believed to be ubiquinone. Couples the redox reaction to proton translocation (for every two electrons transferred, four hydrogen ions are translocated across the cytoplasmic membrane), and thus conserves the redox energy in a proton gradient. This chain is NADH-quinone oxidoreductase subunit D, found in Burkholderia mallei (strain NCTC 10247).